Reading from the N-terminus, the 418-residue chain is Serine hydroxymethyltransferase (418 aa).

Residues leucine 121 and 125 to 127 (GHL) contribute to the (6S)-5,6,7,8-tetrahydrofolate site. Lysine 230 is subject to N6-(pyridoxal phosphate)lysine. 356-358 (SPF) serves as a coordination point for (6S)-5,6,7,8-tetrahydrofolate.

Belongs to the SHMT family. In terms of assembly, homodimer. Requires pyridoxal 5'-phosphate as cofactor.

Its subcellular location is the cytoplasm. It catalyses the reaction (6R)-5,10-methylene-5,6,7,8-tetrahydrofolate + glycine + H2O = (6S)-5,6,7,8-tetrahydrofolate + L-serine. Its pathway is one-carbon metabolism; tetrahydrofolate interconversion. It functions in the pathway amino-acid biosynthesis; glycine biosynthesis; glycine from L-serine: step 1/1. Its function is as follows. Catalyzes the reversible interconversion of serine and glycine with tetrahydrofolate (THF) serving as the one-carbon carrier. This reaction serves as the major source of one-carbon groups required for the biosynthesis of purines, thymidylate, methionine, and other important biomolecules. Also exhibits THF-independent aldolase activity toward beta-hydroxyamino acids, producing glycine and aldehydes, via a retro-aldol mechanism. This Pseudoalteromonas translucida (strain TAC 125) protein is Serine hydroxymethyltransferase.